Here is a 522-residue protein sequence, read N- to C-terminus: Cell polarity protein mod5 (522 aa).

5 disordered regions span residues 1 to 83, 119 to 158, 170 to 192, 251 to 285, and 300 to 516; these read MSAL…PDGD, KRSASKSPKRSANGSTSEDISIEGSPSETAKGARSSFNSN, RRILEASQDSSRPGRYSYRTKSA, PLQPYSPPANETPASSSSSAKARPVSVPDMSSPVP, and YSPS…KLEK. Polar residues-rich tracts occupy residues 27–46, 66–76, and 131–146; these read PNTTVGFQFDNRNVGTSAPS, LPSSKQDTGSS, and NGSTSEDISIEGSPSE. Serine 43 carries the post-translational modification Phosphoserine. Residues 258-285 show a composition bias toward low complexity; it reads PANETPASSSSSAKARPVSVPDMSSPVP. Phosphoserine is present on serine 303. Residues 308–318 show a composition bias toward basic and acidic residues; it reads KVAETDSESRK. Polar residues predominate over residues 335–349; the sequence is GAQTQSTPNRISRSD. A Phosphoserine modification is found at serine 350. Polar residues-rich tracts occupy residues 363-396 and 404-431; these read NASTASSEAISQSMRSFQPQPNTGSPFPRFTSTN and DIPQSDANDSTVNLNQPNYANLTPTPQV. Residues 439 to 452 show a composition bias toward low complexity; the sequence is SRSSPLPSASVPAL. Composition is skewed to basic and acidic residues over residues 472 to 482 and 495 to 516; these read HESEMPPHVTR and PKEKPSEKSEKPPKKKGSKLEK.

In terms of assembly, interacts with tea1 and tea3.

It localises to the cell membrane. Its function is as follows. With tea1, acts in a positive-feedback loop in the microtubule-mediated regulation of cell polarity. Involved in the anchoring of tea1 at the cortex as well as the correct localization of tea3. This Schizosaccharomyces pombe (strain 972 / ATCC 24843) (Fission yeast) protein is Cell polarity protein mod5 (mod5).